The following is a 299-amino-acid chain: Apolipoprotein E (299 aa).

The N-terminal stretch at 1–18 (MKVLCTVLVVTLLAGCRA) is a signal peptide. Residues 74 to 245 (VLMEDTMKAV…RLEEVREQME (172 aa)) are 8 X 22 AA approximate tandem repeats. Repeat copies occupy residues 75–95 (LMED…QELV), 96–117 (PMAE…ARLG), 118–139 (ADME…AMLG), 140–161 (QSAE…KRML), 162–183 (RDAE…EGAE), 184–206 (RGVS…RAAL), 207–225 (TSQP…LRGR), and 224–242 (GRLE…EVRE). Methionine sulfoxide is present on M137. S141 bears the Phosphoserine mark. Residues 152–162 (HLRKLRKRMLR) are LDL and other lipoprotein receptors binding. 156–159 (LRKR) is a binding site for heparin. Residues 205 to 273 (ALTSQPLQER…GWFEPMVEDM (69 aa)) are lipid-binding and lipoprotein association. Residue 219–226 (GKQLRGRL) coordinates heparin. A specificity for association with VLDL region spans residues 261 to 273 (RLKGWFEPMVEDM).

The protein belongs to the apolipoprotein A1/A4/E family. Homotetramer. May interact with ABCA1; functionally associated with ABCA1 in the biogenesis of HDLs. May interact with APP/A4 amyloid-beta peptide; the interaction is extremely stable in vitro but its physiological significance is unclear. May interact with MAPT. May interact with MAP2. In the cerebrospinal fluid, interacts with secreted SORL1. Interacts with PMEL; this allows the loading of PMEL luminal fragment on ILVs to induce fibril nucleation. Post-translationally, APOE exists as multiple glycosylated and sialylated glycoforms within cells and in plasma. The extent of glycosylation and sialylation are tissue and context specific. In terms of processing, glycated in plasma VLDL. Phosphorylated by FAM20C in the extracellular medium.

The protein localises to the secreted. It is found in the extracellular space. Its subcellular location is the extracellular matrix. It localises to the extracellular vesicle. The protein resides in the endosome. The protein localises to the multivesicular body. Its function is as follows. APOE is an apolipoprotein, a protein associating with lipid particles, that mainly functions in lipoprotein-mediated lipid transport between organs via the plasma and interstitial fluids. APOE is a core component of plasma lipoproteins and is involved in their production, conversion and clearance. Apolipoproteins are amphipathic molecules that interact both with lipids of the lipoprotein particle core and the aqueous environment of the plasma. As such, APOE associates with chylomicrons, chylomicron remnants, very low density lipoproteins (VLDL) and intermediate density lipoproteins (IDL) but shows a preferential binding to high-density lipoproteins (HDL). It also binds a wide range of cellular receptors including the LDL receptor/LDLR, the LDL receptor-related proteins LRP1, LRP2 and LRP8 and the very low-density lipoprotein receptor/VLDLR that mediate the cellular uptake of the APOE-containing lipoprotein particles. Finally, APOE also has a heparin-binding activity and binds heparan-sulfate proteoglycans on the surface of cells, a property that supports the capture and the receptor-mediated uptake of APOE-containing lipoproteins by cells. A main function of APOE is to mediate lipoprotein clearance through the uptake of chylomicrons, VLDLs, and HDLs by hepatocytes. APOE is also involved in the biosynthesis by the liver of VLDLs as well as their uptake by peripheral tissues ensuring the delivery of triglycerides and energy storage in muscle, heart and adipose tissues. By participating in the lipoprotein-mediated distribution of lipids among tissues, APOE plays a critical role in plasma and tissues lipid homeostasis. APOE is also involved in two steps of reverse cholesterol transport, the HDLs-mediated transport of cholesterol from peripheral tissues to the liver, and thereby plays an important role in cholesterol homeostasis. First, it is functionally associated with ABCA1 in the biogenesis of HDLs in tissues. Second, it is enriched in circulating HDLs and mediates their uptake by hepatocytes. APOE also plays an important role in lipid transport in the central nervous system, regulating neuron survival and sprouting. In Tympanoctomys barrerae (Plains viscacha rat), this protein is Apolipoprotein E (Apoe).